The following is a 610-amino-acid chain: UvrABC system protein C (610 aa).

The GIY-YIG domain occupies 16 to 94; the sequence is NQPGVYRMYD…IKRYQPRYNV (79 aa). Residues 204-239 enclose the UVR domain; sequence SQVIDALVARMEEASRALRFEEAARLRDQIQAVRRV.

This sequence belongs to the UvrC family. In terms of assembly, interacts with UvrB in an incision complex.

It localises to the cytoplasm. The UvrABC repair system catalyzes the recognition and processing of DNA lesions. UvrC both incises the 5' and 3' sides of the lesion. The N-terminal half is responsible for the 3' incision and the C-terminal half is responsible for the 5' incision. In Edwardsiella ictaluri (strain 93-146), this protein is UvrABC system protein C.